The primary structure comprises 1087 residues: Exportin-7-A (1087 aa).

One can recognise an Importin N-terminal domain in the interval 30–96 (AEKALVEFTN…RNYVLTYLAT (67 aa)).

The protein belongs to the exportin family. As to expression, expressed in oocytes (at protein level).

The protein resides in the cytoplasm. Its subcellular location is the nucleus. Functionally, mediates the nuclear export of proteins (cargos) with broad substrate specificity. In Xenopus laevis (African clawed frog), this protein is Exportin-7-A (xpo7-a).